A 165-amino-acid polypeptide reads, in one-letter code: Phosphopantetheine adenylyltransferase (165 aa).

Ser10 contacts substrate. Residues 10–11 and His18 each bind ATP; that span reads SF. 3 residues coordinate substrate: Lys42, Thr79, and Arg93. ATP is bound by residues 94-96, Glu104, and 129-135; these read GLR and VRPITAT.

The protein belongs to the bacterial CoaD family. In terms of assembly, homohexamer. Mg(2+) serves as cofactor.

It is found in the cytoplasm. It catalyses the reaction (R)-4'-phosphopantetheine + ATP + H(+) = 3'-dephospho-CoA + diphosphate. Its pathway is cofactor biosynthesis; coenzyme A biosynthesis; CoA from (R)-pantothenate: step 4/5. Reversibly transfers an adenylyl group from ATP to 4'-phosphopantetheine, yielding dephospho-CoA (dPCoA) and pyrophosphate. The protein is Phosphopantetheine adenylyltransferase of Rhodopseudomonas palustris (strain BisB5).